The sequence spans 1069 residues: Adenylate-forming reductase (1069 aa).

The tract at residues 20–391 (HPEDPKAVKS…WKLRQDINYR (372 aa)) is adenylation (A) domain. AMP is bound by residues H262, 357–358 (AH), T362, and 437–440 (AVGR). A Carrier domain is found at 576-656 (DSLEEDLKDL…KLGASLRHLA (81 aa)). At S612 the chain carries O-(pantetheine 4'-phosphoryl)serine. A reductase (R) domain region spans residues 686-1032 (TVLLTGSTGN…TGKVILDTSR (347 aa)). Residues 693 to 696 (TGNL), R719, 785 to 787 (NAW), Y863, and K867 contribute to the NADP(+) site.

Belongs to the adenylate-forming reductase family.

The enzyme catalyses 5-methylorsellinate + ATP + NADPH + H(+) = 2,4-dihydroxy 5,6-dimethylbenzaldehyde + AMP + diphosphate + NADP(+). It functions in the pathway secondary metabolite biosynthesis. Functionally, non-canonical non-ribosomal peptide synthetase; part of the cluster A that mediates the biosynthesis of azasperpyranones, members of the azaphilone family that exhibit anti-cancer activities. Azasperpyranones are synthesized by 2 clusters, A and B. Cluster A is responsible for the production of the polyhydric phenol moiety while the azaphilonoid scaffold is produced by the cluster B. The non-reducing polyketide synthase ATEG_03629 produces 5-methyl orsellinic acid, which is then reduced to 5-methyl orsellinic aldehyde by the NRPS-like protein ATEG_03630. 5-methyl orsellinic aldehyde is then first hydroxylated by the FAD-dependent monooxygenase ATEG_03635 and subsequently hydroxylated by the cytochrome P450 monooxygenase ATEG_03631 to produce the unstable polyhydric phenol precursor of azasperpyranones. On the other hand, the polyketide synthase ATEG_07659 is responsible for producing the 3,5-dimethyloctadienone moiety from acetyl-CoA, three malonyl-CoA, and two S-adenosyl methionines (SAM). The 3,5-dimethyloctadienone moiety is then loaded onto the SAT domain of ATEG_07661 and extended with four malonyl-CoA and one SAM, which leads to the formation of 2,4-dihydroxy-6-(5,7-dimethyl-2-oxo-trans-3-trans-5-nonadienyl)-3-methylbenzaldehyde (compound 8) after reductive release and aldol condensation. The FAD-dependent monooxygenase ATEG_07662 is the next enzyme in the biosynthesis sequence and hydroxylates the side chain at the benzylic position of compound 8. In Aspergillus nidulans, afoF, the ortholog of the FAD-dependent oxygenase ATEG_07660, is the key enzyme for the biosynthesis of asperfuranone by catalyzing the hydroxylation at C-8 of to prevent the formation of a six-membered ring hemiacetal intermediate and thus facilitating the formation of a five-membered ring to produce asperfuranone. In Aspergillus terreus, ATEG_07660 is probably not functional, which leads to the formation of the six-membered ring hemiacetal intermediate presperpyranone instead of asperfuranone. Finally, ATEG_03636 is involved in the condensation of the polyhydric phenol moiety produced by cluster A and the perasperpyranone precursor produced by cluster B, to yield azasperpyranone A. Further modifications of azasperpyranone A result in the production of derivatives, including azasperpyranone B to F. The chain is Adenylate-forming reductase from Aspergillus terreus (strain NIH 2624 / FGSC A1156).